The chain runs to 862 residues: MFLNTLKAVFGTKNDREVKKYFKRVVQINALEGKYQNLSDDELKAEFEKFKEQILSGEKNENDILNDVFAIVRETGKRTLNMRHFDVQLIGGMVLHDGKIAEMKTGEGKTLVATLPVVLNAMSGKGVHVVTVNDYLAKRDAEQMSAIYNFLGFSVGVVLSSQNSDIEHKQAYDCDITYGTNNEFGFDYLRDNMKFSKAEKVQREHNFVIVDEVDSILIDEARTPLIISGPTNRTLDGYIKANEVAKQMQKGEAVLPPEKPEGDFVVDEKNRSVLITEAGIAKAEKLFGVENLYSLENAILAHQLDQALKAHNLFEKDVHYVLRNKEVIIVDEFTGRLSEGRRFSEGLHQALEAKENVKIQEESQTLADITFQNYFRMYNKLAGMTGTAQTEATEFSQIYSLDVISIPTNIPIKRQDKDDLIYKTQNEKFKAVIEEIKKANAKGQPVLVGTASIERSEVFHNMLAKEKIPHHVLNAKNHEQEALIIQDAGKKGAVTIATNMAGRGVDIKIDDEIRALGGLYIIGTERHESRRIDNQLRGRAGRQGDPGISRFYLSLEDNLLRIFGGDRIKSIMDRLGIEEGESIESRIVTRAVENAQKKVESLHFESRKHLLEYDDVANEQRKTIYRYRNELLDENYDIRAKISQNIAEYSANVMNDYMLDESGSNVNFENLKAKILYECSTQISEKDFENLSVIEMQDKLSQILENSYNEKMSRLEIKELRNIERILYLQVLDNVWREHLYQMDILKTGIGLRGYNQKDPLVEYKKESYNLFLELVNRIKFDSIKLLFSVQFNQQEAQNLENKANEENEKLLQSSVEMGASEDNLGEAEFKKVPRNAPCPCGSGKKFKECHGKSGPKQGILA.

Residues Gln88, 106–110, and Asp506 each bind ATP; that span reads GEGKT. Zn(2+) is bound by residues Cys839, Cys841, Cys850, and His851.

The protein belongs to the SecA family. Monomer and homodimer. Part of the essential Sec protein translocation apparatus which comprises SecA, SecYEG and auxiliary proteins SecDF-YajC and YidC. Requires Zn(2+) as cofactor.

Its subcellular location is the cell inner membrane. The protein resides in the cytoplasm. It catalyses the reaction ATP + H2O + cellular proteinSide 1 = ADP + phosphate + cellular proteinSide 2.. Part of the Sec protein translocase complex. Interacts with the SecYEG preprotein conducting channel. Has a central role in coupling the hydrolysis of ATP to the transfer of proteins into and across the cell membrane, serving as an ATP-driven molecular motor driving the stepwise translocation of polypeptide chains across the membrane. This Campylobacter jejuni subsp. doylei (strain ATCC BAA-1458 / RM4099 / 269.97) protein is Protein translocase subunit SecA.